Here is a 163-residue protein sequence, read N- to C-terminus: Retinoic acid receptor responder protein 2 (163 aa).

A signal peptide spans Met-1–Ala-20. Intrachain disulfides connect Cys-77/Cys-87, Cys-98/Cys-117, and Cys-101/Cys-135. Positions Lys-158–Ser-163 are excised as a propeptide.

Post-translationally, secreted in an inactive precursor form, prochemerin, which is proteolytically processed by a variety of extracellular proteases to generate forms with differing levels of bioactivity. For example, the removal of six amino acids results in chemerin-157, which exhibits the highest activity, while removal of seven amino acids results in chemerin-156 which has slightly less activity. Some proteases are able to cleave at more than one site and chemerin forms may be sequentially processed by different enzymes to modulate activity levels. The coordinated expression and activity of chemerin-modifying enzymes is essential for regulating its bioactivation, inactivation and, consequently, biological function. Cathepsin G cleaves seven C-terminal amino acids from prochemerin (chemerin-156), elastase is able to cleave six (chemerin-157), eight (chemerin-155) or eleven (chemerin-152), plasmin cleaves five amino acids (chemerin-158), and tryptase cleaves five (chemerin-158) or eight (chemerin-155). Multiple cleavages might be required to fully activate chemerin, with an initial tryptase cleavage resulting in chemerin with low activity (chemerin-158), and a second cleavage by carboxypeptidase N or B producing highly active chemerin (chemerin-157). As to expression, expressed at the highest levels in placenta, liver, and white adipose tissue (WAT), and to a lesser extent in many other tissues such as lung, brown adipose tissue, heart, ovary, kidney, skeletal muscle and pancreas. Within WAT, expression is enriched in adipocytes as compared to the stromal vascular fraction. Expression and secretion increases dramatically with adipogenesis. Highly expressed in skin (basal and suprabasal layers of the epidermis, hair follicles and endothelial cells). Expression is elevated in numerous metabolic and inflammatory diseases including psoriasis, obesity, type 2 diabetes, metabolic syndrome and cardiovascular disease.

Its subcellular location is the secreted. Adipocyte-secreted protein (adipokine) that regulates adipogenesis, metabolism and inflammation through activation of the chemokine-like receptor 1 (CMKLR1). Also acts as a ligand for CMKLR2. Can also bind to C-C chemokine receptor-like 2 (CCRL2), but with a lower affinity than it does to CMKLR1 or CMKLR2. Positively regulates adipocyte differentiation, modulates the expression of adipocyte genes involved in lipid and glucose metabolism and might play a role in angiogenesis, a process essential for the expansion of white adipose tissue. Also acts as a pro-inflammatory adipokine, causing an increase in secretion of pro-inflammatory and prodiabetic adipokines, which further impair adipose tissue metabolic function and have negative systemic effects including impaired insulin sensitivity, altered glucose and lipid metabolism, and a decrease in vascular function in other tissues. Can have both pro- and anti-inflammatory properties depending on the modality of enzymatic cleavage by different classes of proteases. Acts as a chemotactic factor for leukocyte populations expressing CMKLR1, particularly immature plasmacytoid dendritic cells, but also immature myeloid DCs, macrophages and natural killer cells. Exerts an anti-inflammatory role by preventing TNF/TNFA-induced VCAM1 expression and monocytes adhesion in vascular endothelial cells. The effect is mediated via inhibiting activation of NF-kappa-B and CRK/p38 through stimulation of AKT1/NOS3 signaling and nitric oxide production. Its dual role in inflammation and metabolism might provide a link between chronic inflammation and obesity, as well as obesity-related disorders such as type 2 diabetes and cardiovascular disease. Exhibits an antimicrobial function in the skin. The chain is Retinoic acid receptor responder protein 2 (RARRES2) from Homo sapiens (Human).